A 280-amino-acid polypeptide reads, in one-letter code: Exfoliative toxin A (280 aa).

A signal peptide spans 1–38 (MNNSKIISKVLLSLSLFTVGASAFVIQDELMQKNHAKA). Active-site charge relay system residues include H110, D158, and S233.

It belongs to the peptidase S1B family. It depends on Ca(2+) as a cofactor.

Has serine protease-like properties and binds to the skin protein profilaggrin. Cleaves substrates after acidic residues. Exfoliative toxins cause impetigous diseases commonly referred as staphylococcal scalded skin syndrome (SSSS). The polypeptide is Exfoliative toxin A (eta) (Staphylococcus aureus).